We begin with the raw amino-acid sequence, 103 residues long: Small ribosomal subunit protein uS14c (103 aa).

The disordered stretch occupies residues 26-56; sequence SSKKKIRSKVSPLSLSEKTKMQEKLQSLPRN.

Belongs to the universal ribosomal protein uS14 family. Part of the 30S ribosomal subunit.

It is found in the plastid. The protein resides in the chloroplast. Functionally, binds 16S rRNA, required for the assembly of 30S particles. This is Small ribosomal subunit protein uS14c from Saccharum officinarum (Sugarcane).